Here is a 63-residue protein sequence, read N- to C-terminus: Large ribosomal subunit protein uL30 (63 aa).

Belongs to the universal ribosomal protein uL30 family. In terms of assembly, part of the 50S ribosomal subunit.

The protein is Large ribosomal subunit protein uL30 of Methylobacterium sp. (strain 4-46).